Reading from the N-terminus, the 207-residue chain is Vascular endothelial growth factor B (207 aa).

An N-terminal signal peptide occupies residues 1–21; that stretch reads MSPLLRRLLLAALLQLAPAQA. Cystine bridges form between C47–C89, C78–C122, and C82–C124. Residues 122–139 show a composition bias toward basic and acidic residues; that stretch reads CECRPKKKDSAVKPDRAA. Positions 122-207 are disordered; it reads CECRPKKKDS…AASSVAKGGA (86 aa). Over residues 174–207 the composition is skewed to low complexity; the sequence is PSAHAAPSTTSALTPGPAAAAADAAASSVAKGGA.

This sequence belongs to the PDGF/VEGF growth factor family. As to quaternary structure, homodimer; disulfide-linked. Can also form heterodimer with VEGF. Post-translationally, VEGF-B186 is O-glycosylated. As to expression, expressed in all tissues except liver. Highest levels found in heart, skeletal muscle and pancreas.

It localises to the secreted. Growth factor for endothelial cells. VEGF-B167 binds heparin and neuropilin-1 whereas the binding to neuropilin-1 of VEGF-B186 is regulated by proteolysis. The polypeptide is Vascular endothelial growth factor B (VEGFB) (Homo sapiens (Human)).